We begin with the raw amino-acid sequence, 469 residues long: ATP synthase subunit beta (469 aa).

153–160 (GGAGVGKT) is a binding site for ATP.

It belongs to the ATPase alpha/beta chains family. In terms of assembly, F-type ATPases have 2 components, CF(1) - the catalytic core - and CF(0) - the membrane proton channel. CF(1) has five subunits: alpha(3), beta(3), gamma(1), delta(1), epsilon(1). CF(0) has three main subunits: a(1), b(2) and c(9-12). The alpha and beta chains form an alternating ring which encloses part of the gamma chain. CF(1) is attached to CF(0) by a central stalk formed by the gamma and epsilon chains, while a peripheral stalk is formed by the delta and b chains.

Its subcellular location is the cell membrane. The enzyme catalyses ATP + H2O + 4 H(+)(in) = ADP + phosphate + 5 H(+)(out). Produces ATP from ADP in the presence of a proton gradient across the membrane. The catalytic sites are hosted primarily by the beta subunits. The chain is ATP synthase subunit beta from Pediococcus pentosaceus (strain ATCC 25745 / CCUG 21536 / LMG 10740 / 183-1w).